Here is a 257-residue protein sequence, read N- to C-terminus: Phosphate import ATP-binding protein PstB (257 aa).

The region spanning 4 to 252 (LKLNDVNIYY…PDNKETEDYI (249 aa)) is the ABC transporter domain. Residue 36-43 (GPSGCGKS) participates in ATP binding.

The protein belongs to the ABC transporter superfamily. Phosphate importer (TC 3.A.1.7) family. As to quaternary structure, the complex is composed of two ATP-binding proteins (PstB), two transmembrane proteins (PstC and PstA) and a solute-binding protein (PstS).

It localises to the cell membrane. The enzyme catalyses phosphate(out) + ATP + H2O = ADP + 2 phosphate(in) + H(+). In terms of biological role, part of the ABC transporter complex PstSACB involved in phosphate import. Responsible for energy coupling to the transport system. The polypeptide is Phosphate import ATP-binding protein PstB (Corynebacterium efficiens (strain DSM 44549 / YS-314 / AJ 12310 / JCM 11189 / NBRC 100395)).